The following is a 307-amino-acid chain: Ornithine carbamoyltransferase (307 aa).

Residues 56–59, glutamine 83, arginine 107, and 134–137 each bind carbamoyl phosphate; these read STRT and HPCQ. Residues asparagine 165, aspartate 223, and 227–228 contribute to the L-ornithine site; that span reads SM. Carbamoyl phosphate is bound by residues 263 to 264 and arginine 291; that span reads CL.

Belongs to the aspartate/ornithine carbamoyltransferase superfamily. OTCase family.

Its subcellular location is the cytoplasm. It catalyses the reaction carbamoyl phosphate + L-ornithine = L-citrulline + phosphate + H(+). The protein operates within amino-acid biosynthesis; L-arginine biosynthesis; L-arginine from L-ornithine and carbamoyl phosphate: step 1/3. Reversibly catalyzes the transfer of the carbamoyl group from carbamoyl phosphate (CP) to the N(epsilon) atom of ornithine (ORN) to produce L-citrulline. In Cupriavidus pinatubonensis (strain JMP 134 / LMG 1197) (Cupriavidus necator (strain JMP 134)), this protein is Ornithine carbamoyltransferase.